Consider the following 424-residue polypeptide: Galacturonokinase (424 aa).

An N-acetylserine modification is found at S2. 146-155 (DSSGLSSSAA) serves as a coordination point for ATP. Catalysis depends on D197, which acts as the Proton acceptor.

The protein belongs to the GHMP kinase family. Requires Mg(2+) as cofactor. Mn(2+) is required as a cofactor. Ca(2+) serves as cofactor. In terms of tissue distribution, expressed in roots, stems, leaves, flowers and young siliques. Higher expression in the elongating middle stem region than in the lower or upper stem region.

It carries out the reaction D-galacturonate + ATP = 1-phospho-alpha-D-galacturonate + ADP + H(+). Inhibited by EDTA and ADP. Sugar-1-kinase with a strict substrate specificity for the alpha-anomeric configuration of D-galacturonic acid (D-GalA) and ATP. Involved in the biosynthesis of UDP-galacturonic acid (UDP-GalA) from the salvaged GalA that is released during growth-dependent cell wall restructuring. The sequence is that of Galacturonokinase (GALAK) from Arabidopsis thaliana (Mouse-ear cress).